Consider the following 72-residue polypeptide: Exodeoxyribonuclease 7 small subunit (72 aa).

It belongs to the XseB family. In terms of assembly, heterooligomer composed of large and small subunits.

It is found in the cytoplasm. It catalyses the reaction Exonucleolytic cleavage in either 5'- to 3'- or 3'- to 5'-direction to yield nucleoside 5'-phosphates.. In terms of biological role, bidirectionally degrades single-stranded DNA into large acid-insoluble oligonucleotides, which are then degraded further into small acid-soluble oligonucleotides. The chain is Exodeoxyribonuclease 7 small subunit from Chlamydia trachomatis serovar D (strain ATCC VR-885 / DSM 19411 / UW-3/Cx).